Consider the following 253-residue polypeptide: Imidazole glycerol phosphate synthase subunit HisF (253 aa).

Catalysis depends on residues D11 and D130.

The protein belongs to the HisA/HisF family. Heterodimer of HisH and HisF.

It is found in the cytoplasm. It carries out the reaction 5-[(5-phospho-1-deoxy-D-ribulos-1-ylimino)methylamino]-1-(5-phospho-beta-D-ribosyl)imidazole-4-carboxamide + L-glutamine = D-erythro-1-(imidazol-4-yl)glycerol 3-phosphate + 5-amino-1-(5-phospho-beta-D-ribosyl)imidazole-4-carboxamide + L-glutamate + H(+). The protein operates within amino-acid biosynthesis; L-histidine biosynthesis; L-histidine from 5-phospho-alpha-D-ribose 1-diphosphate: step 5/9. In terms of biological role, IGPS catalyzes the conversion of PRFAR and glutamine to IGP, AICAR and glutamate. The HisF subunit catalyzes the cyclization activity that produces IGP and AICAR from PRFAR using the ammonia provided by the HisH subunit. The polypeptide is Imidazole glycerol phosphate synthase subunit HisF (Dehalococcoides mccartyi (strain ATCC BAA-2100 / JCM 16839 / KCTC 5957 / BAV1)).